Here is a 422-residue protein sequence, read N- to C-terminus: Serine hydroxymethyltransferase (422 aa).

(6S)-5,6,7,8-tetrahydrofolate contacts are provided by residues Leu-121 and Gly-125–Leu-127. N6-(pyridoxal phosphate)lysine is present on Lys-230. Ser-355–Phe-357 lines the (6S)-5,6,7,8-tetrahydrofolate pocket.

It belongs to the SHMT family. Homodimer. Requires pyridoxal 5'-phosphate as cofactor.

Its subcellular location is the cytoplasm. It catalyses the reaction (6R)-5,10-methylene-5,6,7,8-tetrahydrofolate + glycine + H2O = (6S)-5,6,7,8-tetrahydrofolate + L-serine. It functions in the pathway one-carbon metabolism; tetrahydrofolate interconversion. Its pathway is amino-acid biosynthesis; glycine biosynthesis; glycine from L-serine: step 1/1. Functionally, catalyzes the reversible interconversion of serine and glycine with tetrahydrofolate (THF) serving as the one-carbon carrier. This reaction serves as the major source of one-carbon groups required for the biosynthesis of purines, thymidylate, methionine, and other important biomolecules. Also exhibits THF-independent aldolase activity toward beta-hydroxyamino acids, producing glycine and aldehydes, via a retro-aldol mechanism. This chain is Serine hydroxymethyltransferase, found in Teredinibacter turnerae (strain ATCC 39867 / T7901).